A 256-amino-acid chain; its full sequence is 1-(5-phosphoribosyl)-5-[(5-phosphoribosylamino)methylideneamino] imidazole-4-carboxamide isomerase (256 aa).

The active-site Proton acceptor is the aspartate 8. Aspartate 129 functions as the Proton donor in the catalytic mechanism.

This sequence belongs to the HisA/HisF family.

Its subcellular location is the cytoplasm. The catalysed reaction is 1-(5-phospho-beta-D-ribosyl)-5-[(5-phospho-beta-D-ribosylamino)methylideneamino]imidazole-4-carboxamide = 5-[(5-phospho-1-deoxy-D-ribulos-1-ylimino)methylamino]-1-(5-phospho-beta-D-ribosyl)imidazole-4-carboxamide. The protein operates within amino-acid biosynthesis; L-histidine biosynthesis; L-histidine from 5-phospho-alpha-D-ribose 1-diphosphate: step 4/9. The polypeptide is 1-(5-phosphoribosyl)-5-[(5-phosphoribosylamino)methylideneamino] imidazole-4-carboxamide isomerase (Prochlorococcus marinus (strain NATL2A)).